We begin with the raw amino-acid sequence, 50 residues long: Protein hunchback (50 aa).

C2H2-type zinc fingers lie at residues 1–5 (HLRNH), 11–33 (FKCG…MKSH), and 39–50 (YRCANCCYATKY).

It belongs to the hunchback C2H2-type zinc-finger protein family.

It localises to the nucleus. In terms of biological role, gap class segmentation protein that controls development of head structures. The polypeptide is Protein hunchback (hb) (Pholcus phalangioides (Longbodied cellar spider)).